We begin with the raw amino-acid sequence, 295 residues long: Shikimate dehydrogenase (NADP(+)) (295 aa).

Shikimate-binding positions include 22–24 and S69; that span reads SLS. K73 serves as the catalytic Proton acceptor. Shikimate contacts are provided by N94 and D111. Residues 135-139 and V236 each bind NADP(+); that span reads GAGGA. Y238 serves as a coordination point for shikimate. G260 contacts NADP(+).

Belongs to the shikimate dehydrogenase family. As to quaternary structure, homodimer.

The enzyme catalyses shikimate + NADP(+) = 3-dehydroshikimate + NADPH + H(+). It participates in metabolic intermediate biosynthesis; chorismate biosynthesis; chorismate from D-erythrose 4-phosphate and phosphoenolpyruvate: step 4/7. In terms of biological role, involved in the biosynthesis of the chorismate, which leads to the biosynthesis of aromatic amino acids. Catalyzes the reversible NADPH linked reduction of 3-dehydroshikimate (DHSA) to yield shikimate (SA). This chain is Shikimate dehydrogenase (NADP(+)), found in Streptococcus uberis (strain ATCC BAA-854 / 0140J).